Reading from the N-terminus, the 721-residue chain is Phosphoribosylformylglycinamidine synthase subunit PurL (721 aa).

His-47 is an active-site residue. ATP contacts are provided by Tyr-50 and Lys-89. Residue Glu-91 coordinates Mg(2+). Substrate-binding positions include 92-95 and Arg-114; that span reads SHNH. His-93 acts as the Proton acceptor in catalysis. Asp-115 lines the Mg(2+) pocket. Substrate is bound at residue Gln-238. Residue Asp-266 participates in Mg(2+) binding. 310-312 serves as a coordination point for substrate; it reads ESQ. Positions 490 and 527 each coordinate ATP. Asn-528 provides a ligand contact to Mg(2+). Position 530 (Ser-530) interacts with substrate.

Belongs to the FGAMS family. In terms of assembly, monomer. Part of the FGAM synthase complex composed of 1 PurL, 1 PurQ and 2 PurS subunits.

The protein resides in the cytoplasm. The enzyme catalyses N(2)-formyl-N(1)-(5-phospho-beta-D-ribosyl)glycinamide + L-glutamine + ATP + H2O = 2-formamido-N(1)-(5-O-phospho-beta-D-ribosyl)acetamidine + L-glutamate + ADP + phosphate + H(+). The protein operates within purine metabolism; IMP biosynthesis via de novo pathway; 5-amino-1-(5-phospho-D-ribosyl)imidazole from N(2)-formyl-N(1)-(5-phospho-D-ribosyl)glycinamide: step 1/2. Functionally, part of the phosphoribosylformylglycinamidine synthase complex involved in the purines biosynthetic pathway. Catalyzes the ATP-dependent conversion of formylglycinamide ribonucleotide (FGAR) and glutamine to yield formylglycinamidine ribonucleotide (FGAM) and glutamate. The FGAM synthase complex is composed of three subunits. PurQ produces an ammonia molecule by converting glutamine to glutamate. PurL transfers the ammonia molecule to FGAR to form FGAM in an ATP-dependent manner. PurS interacts with PurQ and PurL and is thought to assist in the transfer of the ammonia molecule from PurQ to PurL. The sequence is that of Phosphoribosylformylglycinamidine synthase subunit PurL from Ruegeria sp. (strain TM1040) (Silicibacter sp.).